Reading from the N-terminus, the 320-residue chain is Cytochrome f (320 aa).

A signal peptide spans 1-35 (MQTRNTFSWIREEITRSISVSLMIYIITWASISSA). Heme-binding residues include tyrosine 36, cysteine 56, cysteine 59, and histidine 60. Residues 286-306 (VQGLLFFLGSVVLAQIFLVLK) form a helical membrane-spanning segment.

It belongs to the cytochrome f family. As to quaternary structure, the 4 large subunits of the cytochrome b6-f complex are cytochrome b6, subunit IV (17 kDa polypeptide, petD), cytochrome f and the Rieske protein, while the 4 small subunits are PetG, PetL, PetM and PetN. The complex functions as a dimer. Heme is required as a cofactor.

The protein resides in the plastid. It is found in the chloroplast thylakoid membrane. Its function is as follows. Component of the cytochrome b6-f complex, which mediates electron transfer between photosystem II (PSII) and photosystem I (PSI), cyclic electron flow around PSI, and state transitions. This is Cytochrome f from Barbarea verna (Land cress).